A 394-amino-acid polypeptide reads, in one-letter code: Elongation factor Tu 2 (394 aa).

One can recognise a tr-type G domain in the interval 10 to 204; sequence KPHVNVGTIG…ALDSYIPEPE (195 aa). The interval 19-26 is G1; sequence GHVDHGKT. Residue 19 to 26 participates in GTP binding; the sequence is GHVDHGKT. Thr-26 contacts Mg(2+). The tract at residues 60-64 is G2; sequence GITIN. The interval 81-84 is G3; it reads DCPG. Residues 81-85 and 136-139 contribute to the GTP site; these read DCPGH and NKCD. The tract at residues 136-139 is G4; that stretch reads NKCD. Positions 174–176 are G5; it reads SAL.

It belongs to the TRAFAC class translation factor GTPase superfamily. Classic translation factor GTPase family. EF-Tu/EF-1A subfamily. Monomer.

It localises to the cytoplasm. The catalysed reaction is GTP + H2O = GDP + phosphate + H(+). In terms of biological role, GTP hydrolase that promotes the GTP-dependent binding of aminoacyl-tRNA to the A-site of ribosomes during protein biosynthesis. The protein is Elongation factor Tu 2 of Shewanella sp. (strain MR-4).